The sequence spans 240 residues: REF/SRPP-like protein At1g67360 (240 aa).

The segment at 208-240 is disordered; it reads KEDARRKKGGDTAGKKGETTDAADGDKSSSDSE.

Belongs to the REF/SRPP family.

The sequence is that of REF/SRPP-like protein At1g67360 from Arabidopsis thaliana (Mouse-ear cress).